A 289-amino-acid polypeptide reads, in one-letter code: uncharacterized protein (289 aa).

The 61-residue stretch at 2 to 62 (NEKKERIIKT…SACEYYIGMS (61 aa)) folds into the HTH tetR-type domain. Positions 25–44 (TIQEIASECGISKGAFYLHF) form a DNA-binding region, H-T-H motif.

This is an uncharacterized protein from Bacillus subtilis (strain 168).